The following is a 246-amino-acid chain: Acetoacetyl-CoA reductase (246 aa).

Residues G13–I15, G35, R40, G60–V62, and N88–T92 each bind NADP(+). Substrate is bound by residues D94 and Q147–Q150. Catalysis depends on Y153, which acts as the Proton acceptor. P183–I186 is an NADP(+) binding site. Substrate-binding positions include G184–Y185 and R195.

This sequence belongs to the short-chain dehydrogenases/reductases (SDR) family. In terms of assembly, homotetramer.

The protein localises to the cytoplasm. The enzyme catalyses a (3R)-3-hydroxyacyl-CoA + NADP(+) = a 3-oxoacyl-CoA + NADPH + H(+). The catalysed reaction is (3R)-3-hydroxybutanoyl-CoA + NADP(+) = acetoacetyl-CoA + NADPH + H(+). The protein operates within biopolymer metabolism; poly-(R)-3-hydroxybutanoate biosynthesis. In terms of biological role, catalyzes the chiral reduction of acetoacetyl-CoA to (R)-3-hydroxybutyryl-CoA. Is involved in the biosynthesis of polyhydroxybutyrate (PHB), which is accumulated as an intracellular energy reserve material when cells grow under conditions of nutrient limitation. The polypeptide is Acetoacetyl-CoA reductase (Cupriavidus necator (strain ATCC 17699 / DSM 428 / KCTC 22496 / NCIMB 10442 / H16 / Stanier 337) (Ralstonia eutropha)).